Consider the following 154-residue polypeptide: Protein X (154 aa).

Positions P68–F117 are mitochondrial targeting sequence.

Belongs to the orthohepadnavirus protein X family. In terms of assembly, may form homodimer. May interact with host CEBPA, CFLAR, CREB1, DDB1, E4F1, HBXIP, HSPD1/HSP60, NFKBIA, POLR2E and SMAD4. Interacts with host SMC5-SMC6 complex and induces its degradation. Interacts with host TRPC4AP; leading to prevent ubiquitination of TRPC4AP. Interacts with host PLSCR1; this interaction promotes ubiquitination and degradation of HBx and impairs HBx-mediated cell proliferation. In terms of processing, a fraction may be phosphorylated in insect cells and HepG2 cells, a human hepatoblastoma cell line. Phosphorylated in vitro by host protein kinase C or mitogen-activated protein kinase. N-acetylated in insect cells.

It is found in the host cytoplasm. Its subcellular location is the host nucleus. It localises to the host mitochondrion. Multifunctional protein that plays a role in silencing host antiviral defenses and promoting viral transcription. Does not seem to be essential for HBV infection. May be directly involved in development of cirrhosis and liver cancer (hepatocellular carcinoma). Most of cytosolic activities involve modulation of cytosolic calcium. The effect on apoptosis is controversial depending on the cell types in which the studies have been conducted. May induce apoptosis by localizing in mitochondria and causing loss of mitochondrial membrane potential. May also modulate apoptosis by binding host CFLAR, a key regulator of the death-inducing signaling complex (DISC). Promotes viral transcription by using the host E3 ubiquitin ligase DDB1 to target the SMC5-SMC6 complex to proteasomal degradation. This host complex would otherwise bind to viral episomal DNA, and prevents its transcription. Moderately stimulates transcription of many different viral and cellular transcription elements. Promoters and enhancers stimulated by HBx contain DNA binding sites for NF-kappa-B, AP-1, AP-2, c-EBP, ATF/CREB, or the calcium-activated factor NF-AT. The polypeptide is Protein X (Homo sapiens (Human)).